The sequence spans 261 residues: Lysosome-associated membrane glycoprotein 5 (261 aa).

Residues 1–29 (MDLQGRAVPSVDRLRVLLMLFHTMAQIMA) form the signal peptide. The Extracellular segment spans residues 30–234 (EQEVENLSGL…AVDEREQLEE (205 aa)). 3 N-linked (GlcNAc...) asparagine glycosylation sites follow: Asn-35, Asn-53, and Asn-126. Residues 235-255 (TLPLILGLILGLVIVVTLAIY) form a helical membrane-spanning segment. The Cytoplasmic segment spans residues 256 to 261 (HVHPQK).

This sequence belongs to the LAMP family. Glycosylated.

The protein resides in the cytoplasmic vesicle membrane. It is found in the cell membrane. It localises to the cell projection. The protein localises to the dendrite. Its subcellular location is the cytoplasmic vesicle. The protein resides in the secretory vesicle. It is found in the synaptic vesicle membrane. It localises to the growth cone membrane. The protein localises to the early endosome membrane. Its subcellular location is the recycling endosome. The protein resides in the endoplasmic reticulum-Golgi intermediate compartment membrane. It is found in the endosome membrane. In terms of biological role, plays a role in short-term synaptic plasticity in a subset of GABAergic neurons in the brain. This chain is Lysosome-associated membrane glycoprotein 5 (LAMP5), found in Pongo abelii (Sumatran orangutan).